A 161-amino-acid chain; its full sequence is Peptidyl-prolyl cis-trans isomerase 10 (161 aa).

The PPIase cyclophilin-type domain maps to 1-153 (MSVTLHTTSG…VQQKIQNVTI (153 aa)).

Belongs to the cyclophilin-type PPIase family. PPIL3 subfamily.

The enzyme catalyses [protein]-peptidylproline (omega=180) = [protein]-peptidylproline (omega=0). PPIases accelerate the folding of proteins. It catalyzes the cis-trans isomerization of proline imidic peptide bonds in oligopeptides. The sequence is that of Peptidyl-prolyl cis-trans isomerase 10 (cyn-10) from Caenorhabditis elegans.